The chain runs to 514 residues: Threonine synthase (514 aa).

Lys-117 bears the N6-(pyridoxal phosphate)lysine mark. Pyridoxal 5'-phosphate is bound by residues Gly-270, Asn-271, Phe-272, and Asp-274. A phosphoserine mark is found at Ser-319 and Ser-321. Thr-449 contributes to the pyridoxal 5'-phosphate binding site.

Belongs to the threonine synthase family. Pyridoxal 5'-phosphate serves as cofactor.

It carries out the reaction O-phospho-L-homoserine + H2O = L-threonine + phosphate. It functions in the pathway amino-acid biosynthesis; L-threonine biosynthesis; L-threonine from L-aspartate: step 5/5. In terms of biological role, catalyzes the gamma-elimination of phosphate from L-phosphohomoserine and the beta-addition of water to produce L-threonine. This chain is Threonine synthase (thrc), found in Schizosaccharomyces pombe (strain 972 / ATCC 24843) (Fission yeast).